A 444-amino-acid chain; its full sequence is 3-phosphoshikimate 1-carboxyvinyltransferase (444 aa).

Positions 29, 30, and 34 each coordinate 3-phosphoshikimate. Lysine 29 is a binding site for phosphoenolpyruvate. Positions 103 and 132 each coordinate phosphoenolpyruvate. 3-phosphoshikimate contacts are provided by serine 177, glutamine 179, aspartate 329, and lysine 356. Position 179 (glutamine 179) interacts with phosphoenolpyruvate. The Proton acceptor role is filled by aspartate 329. Arginine 360 and arginine 402 together coordinate phosphoenolpyruvate.

This sequence belongs to the EPSP synthase family. In terms of assembly, monomer.

The protein resides in the cytoplasm. The enzyme catalyses 3-phosphoshikimate + phosphoenolpyruvate = 5-O-(1-carboxyvinyl)-3-phosphoshikimate + phosphate. It participates in metabolic intermediate biosynthesis; chorismate biosynthesis; chorismate from D-erythrose 4-phosphate and phosphoenolpyruvate: step 6/7. Catalyzes the transfer of the enolpyruvyl moiety of phosphoenolpyruvate (PEP) to the 5-hydroxyl of shikimate-3-phosphate (S3P) to produce enolpyruvyl shikimate-3-phosphate and inorganic phosphate. The protein is 3-phosphoshikimate 1-carboxyvinyltransferase of Prochlorococcus marinus (strain NATL2A).